Here is a 285-residue protein sequence, read N- to C-terminus: CCR4-NOT transcription complex subunit 7 (285 aa).

A divalent metal cation is bound by residues Asp40, Glu42, Asp161, Asp230, and Glu278.

Belongs to the CAF1 family. As to quaternary structure, component of the CCR4-NOT complex. Mn(2+) serves as cofactor. The cofactor is Mg(2+). It depends on Co(2+) as a cofactor.

The protein localises to the nucleus. It is found in the cytoplasm. It carries out the reaction Exonucleolytic cleavage of poly(A) to 5'-AMP.. Functionally, has 3'-5' poly(A) exoribonuclease activity for synthetic poly(A) RNA substrate. Catalytic component of the CCR4-NOT complex which is one of the major cellular mRNA deadenylases and is linked to various cellular processes including bulk mRNA degradation, miRNA-mediated repression, translational repression during translational initiation and general transcription regulation. During miRNA-mediated repression the complex also seems to act as translational repressor during translational initiation. Additional complex functions may be a consequence of its influence on mRNA expression. The protein is CCR4-NOT transcription complex subunit 7 (cnot7) of Xenopus laevis (African clawed frog).